The chain runs to 995 residues: uncharacterized protein (995 aa).

The first 30 residues, 1–30 (MFIHRMKSNLASLFLSFFLLLACEFTFSYA), serve as a signal peptide directing secretion. 6 N-linked (GlcNAc...) asparagine glycosylation sites follow: Asn115, Asn162, Asn225, Asn422, Asn478, and Asn486. Residue Glu502 is part of the active site. Residues Asn546 and Asn611 are each glycosylated (N-linked (GlcNAc...) asparagine). Residue Asp669 is the Proton donor of the active site. Asn670, Asn823, Asn843, and Asn986 each carry an N-linked (GlcNAc...) asparagine glycan.

It belongs to the glycosyl hydrolase 31 family.

It localises to the spore wall. This is an uncharacterized protein from Schizosaccharomyces pombe (strain 972 / ATCC 24843) (Fission yeast).